The following is a 442-amino-acid chain: 3-phosphoshikimate 1-carboxyvinyltransferase (442 aa).

3-phosphoshikimate is bound by residues Lys23, Ser24, and Arg28. Lys23 contacts phosphoenolpyruvate. The phosphoenolpyruvate site is built by Gly95 and Arg123. 3-phosphoshikimate-binding residues include Ser167, Gln169, Asp315, and Lys342. Position 169 (Gln169) interacts with phosphoenolpyruvate. The Proton acceptor role is filled by Asp315. Arg346 and Arg390 together coordinate phosphoenolpyruvate.

It belongs to the EPSP synthase family. Monomer.

It is found in the cytoplasm. It catalyses the reaction 3-phosphoshikimate + phosphoenolpyruvate = 5-O-(1-carboxyvinyl)-3-phosphoshikimate + phosphate. It participates in metabolic intermediate biosynthesis; chorismate biosynthesis; chorismate from D-erythrose 4-phosphate and phosphoenolpyruvate: step 6/7. Catalyzes the transfer of the enolpyruvyl moiety of phosphoenolpyruvate (PEP) to the 5-hydroxyl of shikimate-3-phosphate (S3P) to produce enolpyruvyl shikimate-3-phosphate and inorganic phosphate. The polypeptide is 3-phosphoshikimate 1-carboxyvinyltransferase (Dichelobacter nodosus (strain VCS1703A)).